Consider the following 388-residue polypeptide: Lipid-A-disaccharide synthase (388 aa).

Belongs to the LpxB family.

It carries out the reaction a lipid X + a UDP-2-N,3-O-bis[(3R)-3-hydroxyacyl]-alpha-D-glucosamine = a lipid A disaccharide + UDP + H(+). Its pathway is bacterial outer membrane biogenesis; LPS lipid A biosynthesis. Functionally, condensation of UDP-2,3-diacylglucosamine and 2,3-diacylglucosamine-1-phosphate to form lipid A disaccharide, a precursor of lipid A, a phosphorylated glycolipid that anchors the lipopolysaccharide to the outer membrane of the cell. In Sulfurihydrogenibium sp. (strain YO3AOP1), this protein is Lipid-A-disaccharide synthase.